The primary structure comprises 66 residues: Large ribosomal subunit protein bL35 (66 aa).

Basic residues-rich tracts occupy residues 1–16 and 38–49; these read MPKM…RVKR and TKQKRQLRKARL. Positions 1 to 49 are disordered; that stretch reads MPKMKTHRGAAKRVKRTASGQLKRSRAFTSHLFANKSTKQKRQLRKARL.

Belongs to the bacterial ribosomal protein bL35 family.

The protein is Large ribosomal subunit protein bL35 of Staphylococcus aureus (strain MSSA476).